A 162-amino-acid chain; its full sequence is Large ribosomal subunit protein uL10 (162 aa).

The protein belongs to the universal ribosomal protein uL10 family. Part of the ribosomal stalk of the 50S ribosomal subunit. The N-terminus interacts with L11 and the large rRNA to form the base of the stalk. The C-terminus forms an elongated spine to which L12 dimers bind in a sequential fashion forming a multimeric L10(L12)X complex.

Its function is as follows. Forms part of the ribosomal stalk, playing a central role in the interaction of the ribosome with GTP-bound translation factors. In Mycoplasma genitalium (strain ATCC 33530 / DSM 19775 / NCTC 10195 / G37) (Mycoplasmoides genitalium), this protein is Large ribosomal subunit protein uL10 (rplJ).